A 142-amino-acid polypeptide reads, in one-letter code: Putative pre-16S rRNA nuclease (142 aa).

The protein belongs to the YqgF nuclease family.

It localises to the cytoplasm. Functionally, could be a nuclease involved in processing of the 5'-end of pre-16S rRNA. This chain is Putative pre-16S rRNA nuclease, found in Staphylococcus aureus (strain bovine RF122 / ET3-1).